Consider the following 448-residue polypeptide: Adenylosuccinate synthetase (448 aa).

Residues 22–28 (GDEGKGK) and 50–52 (GHT) each bind GTP. Aspartate 23 functions as the Proton acceptor in the catalytic mechanism. Positions 23 and 50 each coordinate Mg(2+). Residues 23–26 (DEGK), 48–51 (NAGH), threonine 139, arginine 153, glutamine 234, threonine 249, and arginine 321 each bind IMP. Histidine 51 serves as the catalytic Proton donor. Residue 317–323 (SVTGRPR) participates in substrate binding. Residues arginine 323, 349–351 (KLD), and 431–433 (STG) contribute to the GTP site.

This sequence belongs to the adenylosuccinate synthetase family. Homodimer. Mg(2+) is required as a cofactor.

Its subcellular location is the cytoplasm. The enzyme catalyses IMP + L-aspartate + GTP = N(6)-(1,2-dicarboxyethyl)-AMP + GDP + phosphate + 2 H(+). It functions in the pathway purine metabolism; AMP biosynthesis via de novo pathway; AMP from IMP: step 1/2. Its function is as follows. Plays an important role in the de novo pathway of purine nucleotide biosynthesis. Catalyzes the first committed step in the biosynthesis of AMP from IMP. In Paraburkholderia phymatum (strain DSM 17167 / CIP 108236 / LMG 21445 / STM815) (Burkholderia phymatum), this protein is Adenylosuccinate synthetase.